The sequence spans 276 residues: Kallikrein-11 (276 aa).

A signal peptide spans 1–44 (MRRLKSDWKLSTETREPGARPALLQARMILRLIALALVTGHVGG). The propeptide at 45–47 (ETR) is activation peptide. Residues 48–274 (IIKGYECRPH…YFNWIHEVMR (227 aa)) form the Peptidase S1 domain. Disulfide bonds link C54–C189, C73–C89, C168–C235, C200–C214, and C225–C250. The Charge relay system role is filled by H88. N125 carries an N-linked (GlcNAc...) asparagine glycan. The active-site Charge relay system is D136. Residues N191 and N207 are each glycosylated (N-linked (GlcNAc...) asparagine). S229 (charge relay system) is an active-site residue. N236 carries N-linked (GlcNAc...) asparagine glycosylation.

The protein belongs to the peptidase S1 family. Kallikrein subfamily. Expressed in brain and prostate (isoform 1) and prostate (isoform 2).

It is found in the secreted. In terms of biological role, possible multifunctional protease. Efficiently cleaves 'bz-Phe-Arg-4-methylcoumaryl-7-amide', a kallikrein substrate, and weakly cleaves other substrates for kallikrein and trypsin. The polypeptide is Kallikrein-11 (Klk11) (Mus musculus (Mouse)).